Consider the following 358-residue polypeptide: Probable arabinan endo-1,5-alpha-L-arabinosidase B (358 aa).

The first 16 residues, 1-16 (MVLVATLFSLFTVSLC), serve as a signal peptide directing secretion. Aspartate 39 (proton acceptor) is an active-site residue. N-linked (GlcNAc...) asparagine glycosylation occurs at asparagine 194. Positions 202–227 (HLAKHPKTERVNSQDQNPDPLCRDSS) are disordered. Glutamate 233 (proton donor) is an active-site residue.

This sequence belongs to the glycosyl hydrolase 43 family.

The protein resides in the secreted. It catalyses the reaction Endohydrolysis of (1-&gt;5)-alpha-arabinofuranosidic linkages in (1-&gt;5)-arabinans.. It functions in the pathway glycan metabolism; L-arabinan degradation. Functionally, endo-1,5-alpha-L-arabinanase involved in degradation of pectin. Its preferred substrate is linear 1,5-alpha-L-arabinan. This chain is Probable arabinan endo-1,5-alpha-L-arabinosidase B (abnB), found in Aspergillus flavus (strain ATCC 200026 / FGSC A1120 / IAM 13836 / NRRL 3357 / JCM 12722 / SRRC 167).